The sequence spans 672 residues: DNA ligase (672 aa).

Residues 37 to 41 (DAEYD), 86 to 87 (SL), and glutamate 115 each bind NAD(+). The active-site N6-AMP-lysine intermediate is lysine 117. Arginine 138, glutamate 172, lysine 288, and lysine 312 together coordinate NAD(+). Cysteine 406, cysteine 409, cysteine 424, and cysteine 429 together coordinate Zn(2+). Positions 590–672 (DISSTFAGKT…LQEIQQSKQV (83 aa)) constitute a BRCT domain.

It belongs to the NAD-dependent DNA ligase family. LigA subfamily. Mg(2+) is required as a cofactor. The cofactor is Mn(2+).

It carries out the reaction NAD(+) + (deoxyribonucleotide)n-3'-hydroxyl + 5'-phospho-(deoxyribonucleotide)m = (deoxyribonucleotide)n+m + AMP + beta-nicotinamide D-nucleotide.. Its function is as follows. DNA ligase that catalyzes the formation of phosphodiester linkages between 5'-phosphoryl and 3'-hydroxyl groups in double-stranded DNA using NAD as a coenzyme and as the energy source for the reaction. It is essential for DNA replication and repair of damaged DNA. This chain is DNA ligase, found in Anoxybacillus flavithermus (strain DSM 21510 / WK1).